The following is a 356-amino-acid chain: MSRLQNDTFLRALLRQPTDYTPLWMMRQAGRYLPEYCETRRRAGSFLDLCKSPALACEVTLQPLARYDLDAAILFSDILTVPDAMGLGLYFAEGEGPRFERPLRDEWEIRNLVAPDPHAELQYVMDAVAEIRRALGGSVPLIGFSGSPWTLACYMVEGGSSDDYRRIKTMAYTRPDLLHHVLRVTADSVVAYLNAQIESGAQAVMVFDSWGGVLSEAAYREFSLPYLERVVAGLIRERDGERIPSIVFTKGGGLWLESIAAIGCDAVGLDWTMDIGRARALVGDKVALQGNLDPAILFAPPETIATEAKRVLDAFGPHPGHVFNLGHGISQFTPPEAVSVLVDTVHQHSRKLRGGR.

Substrate contacts are provided by residues 27-31 (RQAGR), Asp-77, Tyr-154, Ser-209, and His-327.

Belongs to the uroporphyrinogen decarboxylase family. In terms of assembly, homodimer.

The protein resides in the cytoplasm. It carries out the reaction uroporphyrinogen III + 4 H(+) = coproporphyrinogen III + 4 CO2. The protein operates within porphyrin-containing compound metabolism; protoporphyrin-IX biosynthesis; coproporphyrinogen-III from 5-aminolevulinate: step 4/4. Catalyzes the decarboxylation of four acetate groups of uroporphyrinogen-III to yield coproporphyrinogen-III. The protein is Uroporphyrinogen decarboxylase of Aromatoleum aromaticum (strain DSM 19018 / LMG 30748 / EbN1) (Azoarcus sp. (strain EbN1)).